A 66-amino-acid polypeptide reads, in one-letter code: Large ribosomal subunit protein bL33c (66 aa).

Belongs to the bacterial ribosomal protein bL33 family.

Its subcellular location is the plastid. It localises to the chloroplast. In Cicer arietinum (Chickpea), this protein is Large ribosomal subunit protein bL33c.